Here is a 128-residue protein sequence, read N- to C-terminus: Kinetoplast-associated protein 4 (128 aa).

Positions 1–10 (MLRFVPRRLA) are excised as a propeptide. A disordered region spans residues 60–87 (AHPGFKRKEKEPKELKAAKAAKTSTPRA). The span at 65–76 (KRKEKEPKELKA) shows a compositional bias: basic and acidic residues.

The protein belongs to the KAP family. In terms of assembly, associates with the kinetoplast DNA network.

The protein resides in the mitochondrion matrix. Its subcellular location is the kinetoplast. Its function is as follows. Histone H1-like DNA-binding protein involved in the organization and segregation of kinetoplast DNA (kDNA). The mitochondrial DNA of kinetoplastid protozoa consists of about 5,000 minicircles and 20 to 30 maxicircles. These circular DNAs are held together by catenation into a highly organized compact disk structure referred to as a kinetoplast DNA (kDNA) network. Binds preferentially to a specific fragment of minicircle DNA and is able to compact kDNA networks through DNA charge neutralization and condensation. The sequence is that of Kinetoplast-associated protein 4 (KAP4) from Crithidia fasciculata.